We begin with the raw amino-acid sequence, 137 residues long: Large ribosomal subunit protein uL16 (137 aa).

Residues 1 to 17 (MLQPKRTKFRKTHKGRN) are compositionally biased toward basic residues. The disordered stretch occupies residues 1-24 (MLQPKRTKFRKTHKGRNRGLANTG).

This sequence belongs to the universal ribosomal protein uL16 family. As to quaternary structure, part of the 50S ribosomal subunit.

Its function is as follows. Binds 23S rRNA and is also seen to make contacts with the A and possibly P site tRNAs. The sequence is that of Large ribosomal subunit protein uL16 from Aeromonas salmonicida (strain A449).